Reading from the N-terminus, the 67-residue chain is MIIPIRCFTCGKVIGNKWESYLGLLQAEYTEGDALDALGLKRYCCRRMLLGHVDLIEKLLNYAPLEK.

Zn(2+)-binding residues include Cys-7, Cys-10, Cys-44, and Cys-45.

The protein belongs to the archaeal Rpo10/eukaryotic RPB10 RNA polymerase subunit family. As to quaternary structure, component of the RNA polymerase I (Pol I), RNA polymerase II (Pol II) and RNA polymerase III (Pol III) complexes consisting of at least 13, 12 and 17 subunits, respectively.

It localises to the nucleus. In terms of biological role, DNA-dependent RNA polymerase catalyzes the transcription of DNA into RNA using the four ribonucleoside triphosphates as substrates. Common component of RNA polymerases I, II and III which synthesize ribosomal RNA precursors, mRNA precursors and many functional non-coding RNAs, and a small RNAs, such as 5S rRNA and tRNAs, respectively. Pol II is the central component of the basal RNA polymerase II transcription machinery. Pols are composed of mobile elements that move relative to each other. In Pol II, Polr2L is part of the core element with the central large cleft. In Drosophila melanogaster (Fruit fly), this protein is DNA-directed RNA polymerases I, II, and III subunit RPABC5.